Consider the following 647-residue polypeptide: MINITFPDGAVREFESGVTTFEIAQSISNSLAKKALAGKFNGKLIDTTRAITEDGSIEIVTPDHEDALPILRHSAAHLFAQAARRLFPDIHLGVGPAIEDGFYYDTDNTAGQISNEDLPRIEEEMQKIVKENFPSIREEVTKDEAREIFKNDPYKLELIEEHSEDEGGLTIYRQGEYVDLCRGPHVPSTGRIQIFHLLHVAGAYWRGNSDNAMMQRIYGTAWFEKKDLKNYLQMREEAKERDHRKLGKELDLFMISQEVGQGLPFWLPNGATIRRELERYIVNKELASGYQHVYTPPLASVELYKTSGHWDHYQEDMFPTMDMGDGEEFVLRPMNCPHHIQVFKHHVHSYRELPIRIAEIGMMHRYEKSGALTGLQRVREMSLNDGHLFVTPEQIQEEFQRALQLIIDVYEDFNLTDYRFRLSLRDPQDTHKYFDNDEMWENAQTMLRAALDEMGVDYFEAEGEAAFYGPKLDIQIKTALGKEETLSTIQLDFLLPERFDLKYIGADGEDHRPVMIHRGVISTMERFTAILIENYKGAFPTWLAPHQVTLIPVSNEKHVDYAWEVAKKLRDRGVRADVDERNEKMQFKIRASQTSKIPYQLIVGDKEMEDETVNVRRYGQKETQTVSVDNFVQAILADIANKSRVEK.

Positions 1-61 (MINITFPDGA…TEDGSIEIVT (61 aa)) constitute a TGS domain. Positions 242–540 (DHRKLGKELD…LIENYKGAFP (299 aa)) are catalytic. Residues Cys-336, His-387, and His-517 each contribute to the Zn(2+) site.

The protein belongs to the class-II aminoacyl-tRNA synthetase family. In terms of assembly, homodimer. Zn(2+) is required as a cofactor.

It is found in the cytoplasm. It carries out the reaction tRNA(Thr) + L-threonine + ATP = L-threonyl-tRNA(Thr) + AMP + diphosphate + H(+). In terms of biological role, catalyzes the attachment of threonine to tRNA(Thr) in a two-step reaction: L-threonine is first activated by ATP to form Thr-AMP and then transferred to the acceptor end of tRNA(Thr). Also edits incorrectly charged L-seryl-tRNA(Thr). The sequence is that of Threonine--tRNA ligase from Streptococcus pneumoniae (strain JJA).